A 265-amino-acid polypeptide reads, in one-letter code: MSDILNTIIATKHQEIAAALASRPLAAVRADAEARGDRRDFVAALRAKHALGKAAVIAEVKKASPSKGVIREDFQPAAIAESYAAHGAACLSVLTDRQYFQGDARYLEDARAACHLPALRKDFIVDEYQVYEARAMGADCILLIAAALELPKMKALEALANELGMAVLVEVHNEEELDAALQLKTELVGVNNRNLRTFEVSLATTLKLLPRITDGRIAVTESGIATVEDVRLMQASGVHTFLVGEAFMREAEPGEALSRLFFAQS.

This sequence belongs to the TrpC family.

It catalyses the reaction 1-(2-carboxyphenylamino)-1-deoxy-D-ribulose 5-phosphate + H(+) = (1S,2R)-1-C-(indol-3-yl)glycerol 3-phosphate + CO2 + H2O. It functions in the pathway amino-acid biosynthesis; L-tryptophan biosynthesis; L-tryptophan from chorismate: step 4/5. In Chromobacterium violaceum (strain ATCC 12472 / DSM 30191 / JCM 1249 / CCUG 213 / NBRC 12614 / NCIMB 9131 / NCTC 9757 / MK), this protein is Indole-3-glycerol phosphate synthase.